The sequence spans 669 residues: Major S-layer protein (669 aa).

The signal sequence occupies residues 1–24 (MKRFAAVSLAALMLLTVFASAASA). Residues N36, N70, N116, N600, and N607 are each glycosylated (N-linked (GlcNAc...) asparagine). Residues 588–648 (DGEVVDDDED…PTEADGTTPG (61 aa)) form a disordered region. Residues 590–627 (EVVDDDEDDDNVTEPVDNDTEVEEPTEEPTEGPTEEPT) are compositionally biased toward acidic residues. Residues 645–665 (TTPGFGVVLGLVGLLAVVYLV) traverse the membrane as a helical segment.

Belongs to the Methanosarcinales S-layer protein family. Post-translationally, glycosylated.

The protein localises to the secreted. It is found in the cell wall. The protein resides in the S-layer. Its subcellular location is the cell membrane. Functionally, S-layer protein. The S-layer is a paracrystalline mono-layered assembly of proteins which coat the surface of the cell. The sequence is that of Major S-layer protein from Methanosarcina mazei (strain ATCC BAA-159 / DSM 3647 / Goe1 / Go1 / JCM 11833 / OCM 88) (Methanosarcina frisia).